Consider the following 86-residue polypeptide: DNA-directed RNA polymerase subunit omega (86 aa).

Belongs to the RNA polymerase subunit omega family. In terms of assembly, the RNAP catalytic core consists of 2 alpha, 1 beta, 1 beta' and 1 omega subunit. When a sigma factor is associated with the core the holoenzyme is formed, which can initiate transcription.

The enzyme catalyses RNA(n) + a ribonucleoside 5'-triphosphate = RNA(n+1) + diphosphate. Functionally, promotes RNA polymerase assembly. Latches the N- and C-terminal regions of the beta' subunit thereby facilitating its interaction with the beta and alpha subunits. This chain is DNA-directed RNA polymerase subunit omega, found in Psychrobacter arcticus (strain DSM 17307 / VKM B-2377 / 273-4).